The primary structure comprises 495 residues: Maternal protein exuperantia-1 (495 aa).

2 disordered regions span residues 197–217 (DESANKENEPENVNRNGSSND) and 377–495 (TIKP…AATN). 2 stretches are compositionally biased toward polar residues: residues 207–216 (ENVNRNGSSN) and 398–414 (AASSKNGAMSSRSTSTE).

Its function is as follows. Ensures the proper localization of the mRNA of the bicoid gene to the anterior regions of the oocyte thus playing a fundamental role in the establishment of the polarity of the oocyte. May bind the bcd mRNA. The sequence is that of Maternal protein exuperantia-1 (exu1) from Drosophila pseudoobscura pseudoobscura (Fruit fly).